A 939-amino-acid polypeptide reads, in one-letter code: Dynamin-like GTPase MGM1, mitochondrial (939 aa).

A mitochondrion-targeting transit peptide spans 1 to 27; that stretch reads MSAQLRAAAAITPAARRVISGPAAVRR. The helical transmembrane segment at 85 to 103 threads the bilayer; it reads FIRVPALFGGMMLGAVGWV. Residues 170–183 are compositionally biased toward gly residues; the sequence is AGEGSGSGEGGPNG. The segment at 170–196 is disordered; sequence AGEGSGSGEGGPNGGPEPPRQSRAGAA. In terms of domain architecture, Dynamin-type G spans 249–522; sequence TVTLPSIVVI…LEQQMSSKLN (274 aa). The interval 259 to 266 is G1 motif; it reads GSQSSGKS. GTP contacts are provided by serine 262, glycine 264, lysine 265, serine 266, serine 267, and glycine 281. Serine 266 provides a ligand contact to Mg(2+). A G2 motif region spans residues 285-287; that stretch reads ITR. The Mg(2+) site is built by threonine 286 and aspartate 359. A G3 motif region spans residues 359–362; sequence DLPG. Residues 427–430 form a G4 motif region; that stretch reads TKMD. GTP contacts are provided by lysine 428, aspartate 430, and serine 457. The G5 motif stretch occupies residues 456 to 459; that stretch reads ISKL. The segment at 549-703 is stalk region; sequence SAESYLAASL…TSDGIEISLK (155 aa). The tract at residues 710–809 is paddle region; that stretch reads DIQPNEWAQG…LSLRIQAAKS (100 aa). Positions 810–877 are stalk region; the sequence is RQCKTLTNKY…GGGLEKFARE (68 aa). A disulfide bond links cysteine 812 and cysteine 821. One can recognise a GED domain in the interval 815-909; that stretch reads LTNKYYCPEV…KIEELHRISS (95 aa).

The protein belongs to the TRAFAC class dynamin-like GTPase superfamily. Dynamin/Fzo/YdjA family. In terms of assembly, oligomeric complex consisting of membrane-bound and soluble forms of MGM1. Cleavage of the transit peptide by mitochondrial processing protease (MPP) produces a long integral membrane form of MGM1 (L-MGM1). Further processing by the rhomboid protease PCP1 produces a short peripheral membrane form of MGM1 (S-MGM1). Both forms are required for full activity.

The protein resides in the mitochondrion inner membrane. It localises to the mitochondrion intermembrane space. The catalysed reaction is GTP + H2O = GDP + phosphate + H(+). Functionally, dynamin-related GTPase that is essential for normal mitochondrial morphology by mediating fusion of the mitochondrial inner membranes, regulating cristae morphology and maintaining respiratory chain function. Exists in two forms: the transmembrane, long form (Dynamin-like GTPase MGM1, long form; L-MGM1), which is tethered to the inner mitochondrial membrane, and the short soluble form (Dynamin-like GTPase MGM1, short form; S-MGM1), which results from proteolytic cleavage and localizes in the intermembrane space. Both forms (L-MGM1 and S-MGM1) cooperate to catalyze the fusion of the mitochondrial inner membrane. The equilibrium between L-MGM1 and S-MGM1 is essential: excess levels of S-MGM1, following loss of mitochondrial membrane potential, lead to an impaired equilibrium between L-MGM1 and S-MGM1, inhibiting mitochondrial fusion. Plays a role in the maintenance and remodeling of mitochondrial cristae, some invaginations of the mitochondrial inner membrane that provide an increase in the surface area. Probably acts by forming helical filaments at the inside of inner membrane tubes with the shape and dimensions of crista junctions. Constitutes the transmembrane long form (L-MGM1) that plays a central role in mitochondrial inner membrane fusion and cristae morphology. L-MGM1 and the soluble short form (S-MGM1) form higher-order helical assemblies that coordinate the fusion of mitochondrial inner membranes. Inner membrane-anchored L-MGM1 molecules initiate membrane remodeling by recruiting soluble S-MGM1 to rapidly polymerize into a flexible cylindrical scaffold encaging the mitochondrial inner membrane. Once at the membrane surface, the formation of S-MGM1 helices induce bilayer curvature. MGM1 dimerization through the paddle region, which inserts into cardiolipin-containing membrane, promotes GTP hydrolysis and the helical assembly of a flexible MGM1 lattice on the membrane, which drives membrane curvature and mitochondrial fusion. In terms of biological role, constitutes the soluble short form (S-MGM1) generated by cleavage by PCP1, which plays a central role in mitochondrial inner membrane fusion and cristae morphology. The transmembrane long form (L-MGM1) and the S-MGM1 form higher-order helical assemblies that coordinate the fusion of mitochondrial inner membranes. Inner membrane-anchored L-MGM1 molecules initiate membrane remodeling by recruiting soluble S-MGM1 to rapidly polymerize into a flexible cylindrical scaffold encaging the mitochondrial inner membrane. Once at the membrane surface, the formation of S-MGM1 helices induce bilayer curvature. MGM1 dimerization through the paddle region, which inserts into cardiolipin-containing membrane, promotes GTP hydrolysis and the helical assembly of a flexible MGM1 lattice on the membrane, which drives membrane curvature and mitochondrial fusion. Excess levels of S-MGM1 produced by cleavage by PCP1 following stress conditions that induce loss of mitochondrial membrane potential, lead to an impaired equilibrium between L-MGM1 and S-MGM1, thereby inhibiting mitochondrial fusion. The polypeptide is Dynamin-like GTPase MGM1, mitochondrial (Chaetomium thermophilum (strain DSM 1495 / CBS 144.50 / IMI 039719) (Thermochaetoides thermophila)).